The sequence spans 533 residues: L-aspartate oxidase (533 aa).

FAD contacts are provided by residues 16–19, K38, 45–52, and D223; these read SGAA and ATFYAQGG. R290 functions as the Proton donor/acceptor in the catalytic mechanism. FAD contacts are provided by residues E375 and 391–392; that span reads SL.

The protein belongs to the FAD-dependent oxidoreductase 2 family. NadB subfamily. FAD serves as cofactor.

The protein resides in the cytoplasm. It catalyses the reaction L-aspartate + O2 = iminosuccinate + H2O2. Its pathway is cofactor biosynthesis; NAD(+) biosynthesis; iminoaspartate from L-aspartate (oxidase route): step 1/1. Its function is as follows. Catalyzes the oxidation of L-aspartate to iminoaspartate, the first step in the de novo biosynthesis of NAD(+). The sequence is that of L-aspartate oxidase (nadB) from Yersinia pestis.